The primary structure comprises 361 residues: Feruloyl CoA ortho-hydroxylase 2 (361 aa).

Residues 211–312 form the Fe2OG dioxygenase domain; the sequence is GSTRINLNYY…RISVPIFVSP (102 aa). Tyrosine 220 lines the 2-oxoglutarate pocket. Histidine 235, aspartate 237, and histidine 293 together coordinate Fe cation. The 2-oxoglutarate site is built by arginine 303 and serine 305.

The protein belongs to the iron/ascorbate-dependent oxidoreductase family. L-ascorbate is required as a cofactor. It depends on Fe(2+) as a cofactor. Low expression in roots.

The enzyme catalyses (E)-feruloyl-CoA + 2-oxoglutarate + O2 = (E)-6-hydroxyferuloyl-CoA + succinate + CO2. It carries out the reaction (E)-6-hydroxyferuloyl-CoA = scopoletin + CoA. In terms of biological role, 2-oxoglutarate (OG)- and Fe(II)-dependent dioxygenase (2OGD)involved in scopoletin biosynthesis. Converts feruloyl CoA into 6'-hydroxyferuloyl CoA but has no activity with ferulic acid, feruloylquinic acid, caffeic acid, caffeoyl CoA, p-coumaric acid, cinnamic acid, cinnamoyl CoA or benzoyl CoA. The chain is Feruloyl CoA ortho-hydroxylase 2 from Arabidopsis thaliana (Mouse-ear cress).